The chain runs to 447 residues: Na(+)-translocating NADH-quinone reductase subunit A (447 aa).

It belongs to the NqrA family. As to quaternary structure, composed of six subunits; NqrA, NqrB, NqrC, NqrD, NqrE and NqrF.

The enzyme catalyses a ubiquinone + n Na(+)(in) + NADH + H(+) = a ubiquinol + n Na(+)(out) + NAD(+). Its function is as follows. NQR complex catalyzes the reduction of ubiquinone-1 to ubiquinol by two successive reactions, coupled with the transport of Na(+) ions from the cytoplasm to the periplasm. NqrA to NqrE are probably involved in the second step, the conversion of ubisemiquinone to ubiquinol. In Yersinia pseudotuberculosis serotype O:1b (strain IP 31758), this protein is Na(+)-translocating NADH-quinone reductase subunit A.